The following is a 397-amino-acid chain: MNYAYPDEKGHYGIYGGRYVPETLMQSVLELEEAYKEAMEDEEFQKELNHYLKTYVGRETPLYFAENMTKYCGGAKIYLKREDLNHTGAHKINNTIGQALLAVRMGKKKVVAETGAGQHGVATATVCALLGLECVIFMGEEDVRRQKLNVFRMELLGAKVESVAAGSGTLKDAVNEALRYWVSHVHDTHYIMGSVLGPHPFPQIVRDFQSVIGNETKKQYEALEGKLPEAVVACIGGGSNAMGMFYPFVHDEEVALYGVEAAGKGVHTEKHAATLTKGSVGVLHGSMMYLLQNEEGQIQEAHSISAGLDYPGVGPEHSLLKDIGRVSYHSITDDEALEAFQLLTKKEGIIPALESSHAVAYALKLAPQMKKDEGLVICLSGRGDKDVESIKRYMEEV.

Lysine 91 carries the N6-(pyridoxal phosphate)lysine modification.

The protein belongs to the TrpB family. As to quaternary structure, tetramer of two alpha and two beta chains. Requires pyridoxal 5'-phosphate as cofactor.

The catalysed reaction is (1S,2R)-1-C-(indol-3-yl)glycerol 3-phosphate + L-serine = D-glyceraldehyde 3-phosphate + L-tryptophan + H2O. It functions in the pathway amino-acid biosynthesis; L-tryptophan biosynthesis; L-tryptophan from chorismate: step 5/5. Its function is as follows. The beta subunit is responsible for the synthesis of L-tryptophan from indole and L-serine. This chain is Tryptophan synthase beta chain, found in Bacillus cereus (strain Q1).